Reading from the N-terminus, the 88-residue chain is Small ribosomal subunit protein bS20 (88 aa).

It belongs to the bacterial ribosomal protein bS20 family.

In terms of biological role, binds directly to 16S ribosomal RNA. In Bradyrhizobium sp. (strain BTAi1 / ATCC BAA-1182), this protein is Small ribosomal subunit protein bS20.